The following is a 333-amino-acid chain: GTP 3',8-cyclase (333 aa).

Positions 7 to 221 (KFGRVHDYIR…FEACNEAGYE (215 aa)) constitute a Radical SAM core domain. Arg-16 is a GTP binding site. Cys-23 and Cys-27 together coordinate [4Fe-4S] cluster. Tyr-29 lines the S-adenosyl-L-methionine pocket. Cys-30 contributes to the [4Fe-4S] cluster binding site. Arg-66 is a binding site for GTP. Position 70 (Gly-70) interacts with S-adenosyl-L-methionine. Thr-97 is a GTP binding site. Residue Ser-121 coordinates S-adenosyl-L-methionine. Residue Lys-158 participates in GTP binding. Residue Met-192 coordinates S-adenosyl-L-methionine. Residues Cys-257 and Cys-260 each contribute to the [4Fe-4S] cluster site. 262–264 (RLR) provides a ligand contact to GTP. Cys-274 serves as a coordination point for [4Fe-4S] cluster.

It belongs to the radical SAM superfamily. MoaA family. Monomer and homodimer. [4Fe-4S] cluster serves as cofactor.

It catalyses the reaction GTP + AH2 + S-adenosyl-L-methionine = (8S)-3',8-cyclo-7,8-dihydroguanosine 5'-triphosphate + 5'-deoxyadenosine + L-methionine + A + H(+). It participates in cofactor biosynthesis; molybdopterin biosynthesis. Catalyzes the cyclization of GTP to (8S)-3',8-cyclo-7,8-dihydroguanosine 5'-triphosphate. The sequence is that of GTP 3',8-cyclase from Listeria monocytogenes serovar 1/2a (strain ATCC BAA-679 / EGD-e).